A 423-amino-acid chain; its full sequence is D-tagatose-1,6-bisphosphate aldolase subunit GatZ (423 aa).

It belongs to the GatZ/KbaZ family. GatZ subfamily. As to quaternary structure, forms a complex with GatY.

It participates in carbohydrate metabolism; D-tagatose 6-phosphate degradation; D-glyceraldehyde 3-phosphate and glycerone phosphate from D-tagatose 6-phosphate: step 2/2. Its function is as follows. Component of the tagatose-1,6-bisphosphate aldolase GatYZ that is required for full activity and stability of the Y subunit. Could have a chaperone-like function for the proper and stable folding of GatY. When expressed alone, GatZ does not show any aldolase activity. Is involved in the catabolism of galactitol. The protein is D-tagatose-1,6-bisphosphate aldolase subunit GatZ of Salmonella dublin (strain CT_02021853).